A 321-amino-acid chain; its full sequence is 2,3,4,5-tetrahydropyridine-2,6-dicarboxylate N-succinyltransferase (321 aa).

Mg(2+)-binding residues include aspartate 166 and glutamate 183. The active-site Acyl-anhydride intermediate is the glutamate 199. Succinyl-CoA is bound by residues arginine 201, glycine 216, serine 219, alanine 242, 257 to 258, glycine 265, lysine 281, and 294 to 297; these read EA and RRNS.

It belongs to the type 2 tetrahydrodipicolinate N-succinyltransferase family. Homotrimer.

The protein localises to the cytoplasm. It carries out the reaction (S)-2,3,4,5-tetrahydrodipicolinate + succinyl-CoA + H2O = (S)-2-succinylamino-6-oxoheptanedioate + CoA. Its pathway is amino-acid biosynthesis; L-lysine biosynthesis via DAP pathway; LL-2,6-diaminopimelate from (S)-tetrahydrodipicolinate (succinylase route): step 1/3. In terms of biological role, catalyzes the conversion of the cyclic tetrahydrodipicolinate (THDP) into the acyclic N-succinyl-L-2-amino-6-oxopimelate using succinyl-CoA. The chain is 2,3,4,5-tetrahydropyridine-2,6-dicarboxylate N-succinyltransferase from Micrococcus luteus (strain ATCC 4698 / DSM 20030 / JCM 1464 / CCM 169 / CCUG 5858 / IAM 1056 / NBRC 3333 / NCIMB 9278 / NCTC 2665 / VKM Ac-2230) (Micrococcus lysodeikticus).